The primary structure comprises 288 residues: Syntaxin-1B (288 aa).

A compositionally biased stretch (basic and acidic residues) spans 1-13 (MKDRTQELRSAKD). Residues 1 to 20 (MKDRTQELRSAKDSDDEEEV) form a disordered region. Residues 1 to 264 (MKDRTQELRS…KYQSKARRKK (264 aa)) are Cytoplasmic-facing. 2 positions are modified to phosphoserine: Ser-10 and Ser-14. Residues 29–104 (MDEFFEQVEE…IEQSIEQEEG (76 aa)) are a coiled coil. In terms of domain architecture, t-SNARE coiled-coil homology spans 191-253 (LNEIETRHNE…ERAVSDTKKA (63 aa)). A helical; Anchor for type IV membrane protein transmembrane segment spans residues 265–288 (IMIIICCVVLGVVLASSIGGTLGL).

This sequence belongs to the syntaxin family. As to quaternary structure, interacts with OTOF. Interacts with SYT6 and SYT8; the interaction is Ca(2+)-dependent. Post-translationally, phosphorylated by CK2.

It is found in the membrane. The protein resides in the nucleus. Its subcellular location is the cytoplasm. It localises to the cytoskeleton. The protein localises to the microtubule organizing center. It is found in the centrosome. The protein resides in the spindle. Potentially involved in docking of synaptic vesicles at presynaptic active zones. May mediate Ca(2+)-regulation of exocytosis acrosomal reaction in sperm. This Homo sapiens (Human) protein is Syntaxin-1B (STX1B).